Consider the following 197-residue polypeptide: Putative rho GDP-dissociation inhibitor 1 (197 aa).

It belongs to the Rho GDI family. As to quaternary structure, interacts with rac1A, rac1B, rac1C, racB, raCC and RacE.

The protein localises to the cytoplasm. Regulates the GDP/GTP exchange reaction of the Rho proteins by inhibiting the dissociation of GDP from them, and the subsequent binding of GTP to them. Regulates the Rac-dependent signaling pathways controlling cytokinesis, actin reorganization and the contractile vacuole. Required for efficient accumulation of cap at the cell cortex. This chain is Putative rho GDP-dissociation inhibitor 1 (rdiA), found in Dictyostelium discoideum (Social amoeba).